The primary structure comprises 867 residues: Glucans biosynthesis glucosyltransferase H (867 aa).

The segment at 71 to 91 (DDEGRTQLETMPKATRSSISP) is disordered. 6 helical membrane passes run 139 to 156 (YILLLLTFSQTALATWYM), 194 to 216 (ILILFAILFCWISAGFWTALMGF), 518 to 540 (VMSYLSAPLWFMFLALSTALQVV), 568 to 590 (IALLASTMVLLFLPKLLSILLIW), 603 to 625 (VTISLLLEVILSVLLAPVRMLFH), and 680 to 702 (FLFWLAPIVFSLILSPFVSVFSS).

The protein belongs to the glycosyltransferase 2 family. OpgH subfamily.

It localises to the cell inner membrane. Its pathway is glycan metabolism; osmoregulated periplasmic glucan (OPG) biosynthesis. In terms of biological role, involved in the biosynthesis of osmoregulated periplasmic glucans (OPGs). The polypeptide is Glucans biosynthesis glucosyltransferase H (Nitrosomonas europaea (strain ATCC 19718 / CIP 103999 / KCTC 2705 / NBRC 14298)).